A 233-amino-acid polypeptide reads, in one-letter code: Probable F-box protein At3g56670 (233 aa).

One can recognise an F-box domain in the interval 22-69 (HGGVIDIPLNTDSGVTKNTPGEIALLRFKSVSKLWSSIISSRRDFIES).

The protein is Probable F-box protein At3g56670 of Arabidopsis thaliana (Mouse-ear cress).